Here is a 255-residue protein sequence, read N- to C-terminus: 5'-nucleotidase SurE (255 aa).

Positions 8, 9, 40, and 93 each coordinate a divalent metal cation.

The protein belongs to the SurE nucleotidase family. It depends on a divalent metal cation as a cofactor.

The protein localises to the cytoplasm. It catalyses the reaction a ribonucleoside 5'-phosphate + H2O = a ribonucleoside + phosphate. Its function is as follows. Nucleotidase that shows phosphatase activity on nucleoside 5'-monophosphates. The sequence is that of 5'-nucleotidase SurE from Rhodopseudomonas palustris (strain BisB18).